The chain runs to 209 residues: NAD(P)H-quinone oxidoreductase subunit I (209 aa).

2 consecutive 4Fe-4S ferredoxin-type domains span residues 55 to 84 (GRIHFERPKCISCEVCVRVCPINLPVVDYE) and 95 to 124 (NSYSIDFGVCIFCGNCVEYCPTSCLSMTEE). Residues Cys-64, Cys-67, Cys-70, Cys-74, Cys-104, Cys-107, Cys-110, and Cys-114 each coordinate [4Fe-4S] cluster.

The protein belongs to the complex I 23 kDa subunit family. As to quaternary structure, NDH-1 is composed of at least 11 different subunits. It depends on [4Fe-4S] cluster as a cofactor.

The protein resides in the cell inner membrane. The catalysed reaction is a plastoquinone + NADH + (n+1) H(+)(in) = a plastoquinol + NAD(+) + n H(+)(out). The enzyme catalyses a plastoquinone + NADPH + (n+1) H(+)(in) = a plastoquinol + NADP(+) + n H(+)(out). NDH-1 shuttles electrons from an unknown electron donor, via FMN and iron-sulfur (Fe-S) centers, to quinones in the respiratory and/or the photosynthetic chain. The immediate electron acceptor for the enzyme in this species is believed to be plastoquinone. Couples the redox reaction to proton translocation, and thus conserves the redox energy in a proton gradient. The polypeptide is NAD(P)H-quinone oxidoreductase subunit I (Gloeobacter violaceus (strain ATCC 29082 / PCC 7421)).